The chain runs to 779 residues: Probable ATP-dependent RNA helicase DHX40 (779 aa).

A disordered region spans residues 1-28; it reads MSRFPAVAGRAPRRQEEGERSRDLQEER. Over residues 13 to 28 the composition is skewed to basic and acidic residues; that stretch reads RRQEEGERSRDLQEER. Residues 63–231 enclose the Helicase ATP-binding domain; sequence IQAVRDNSFL…FGNCPIFDIP (169 aa). An ATP-binding site is contributed by 76-83; sequence GNTGSGKT. Positions 173–176 match the DEAH box motif; sequence DEAH. The Helicase C-terminal domain maps to 263–442; sequence TMDIHLNEMA…SVVLTLKCLA (180 aa). The interval 737-779 is disordered; the sequence is SKDVLKKMQRRNDDKSISDARARFLERKQQRTQDHSDTRKETG.

Belongs to the DEAD box helicase family. DEAH subfamily. As to expression, ubiquitously expressed.

It catalyses the reaction ATP + H2O = ADP + phosphate + H(+). Probable ATP-dependent RNA helicase. The chain is Probable ATP-dependent RNA helicase DHX40 (DHX40) from Homo sapiens (Human).